Here is a 184-residue protein sequence, read N- to C-terminus: ATP synthase subunit delta (184 aa).

This sequence belongs to the ATPase delta chain family. As to quaternary structure, F-type ATPases have 2 components, F(1) - the catalytic core - and F(0) - the membrane proton channel. F(1) has five subunits: alpha(3), beta(3), gamma(1), delta(1), epsilon(1). F(0) has three main subunits: a(1), b(2) and c(10-14). The alpha and beta chains form an alternating ring which encloses part of the gamma chain. F(1) is attached to F(0) by a central stalk formed by the gamma and epsilon chains, while a peripheral stalk is formed by the delta and b chains.

The protein localises to the cell inner membrane. Its function is as follows. F(1)F(0) ATP synthase produces ATP from ADP in the presence of a proton or sodium gradient. F-type ATPases consist of two structural domains, F(1) containing the extramembraneous catalytic core and F(0) containing the membrane proton channel, linked together by a central stalk and a peripheral stalk. During catalysis, ATP synthesis in the catalytic domain of F(1) is coupled via a rotary mechanism of the central stalk subunits to proton translocation. This protein is part of the stalk that links CF(0) to CF(1). It either transmits conformational changes from CF(0) to CF(1) or is implicated in proton conduction. This Rickettsia canadensis (strain McKiel) protein is ATP synthase subunit delta.